The chain runs to 634 residues: DNA-directed RNA polymerase subunit gamma (634 aa).

Residues C74, C76, C89, and C92 each coordinate Zn(2+). The Mg(2+) site is built by D471, D473, and D475.

Belongs to the RNA polymerase beta' chain family. RpoC1 subfamily. In cyanobacteria the RNAP catalytic core is composed of 2 alpha, 1 beta, 1 beta', 1 gamma and 1 omega subunit. When a sigma factor is associated with the core the holoenzyme is formed, which can initiate transcription. It depends on Mg(2+) as a cofactor. Requires Zn(2+) as cofactor.

It catalyses the reaction RNA(n) + a ribonucleoside 5'-triphosphate = RNA(n+1) + diphosphate. Functionally, DNA-dependent RNA polymerase catalyzes the transcription of DNA into RNA using the four ribonucleoside triphosphates as substrates. This is DNA-directed RNA polymerase subunit gamma from Prochlorococcus marinus (strain SARG / CCMP1375 / SS120).